The chain runs to 150 residues: Transcription antitermination protein NusB (150 aa).

It belongs to the NusB family.

Functionally, involved in transcription antitermination. Required for transcription of ribosomal RNA (rRNA) genes. Binds specifically to the boxA antiterminator sequence of the ribosomal RNA (rrn) operons. This Streptococcus pyogenes serotype M3 (strain ATCC BAA-595 / MGAS315) protein is Transcription antitermination protein NusB.